Reading from the N-terminus, the 340-residue chain is MAKVFYNGDINEGVLQGKTVAIIGYGSQGHAHAQNLRDSGQEVIVGLRPGKSWDKAAEDGFQVYSVREAASRADVIMILLPDEHQPTVYKNEIEPELSEGKTLAFAHGFNVHFNQIVPPATVDVFLAAPKGPGHLVRRTYVDGAGVPGLVAVYQDATGQAKDIALAYSKMNGSARAGVIETTFQEETETDLFGEQAVLCGGTSALVKAGFETLVEAGYQPEVAYFECLHELKLIVDLMYEGGLEYMRYSISDTAQWGDFQAGPRVVTAETKQAMKDILSDIQTGKFAKGWILENQANRPEFTAINEREKNHPLEVVGRELREMMPFVKAKSKGVVGSAKN.

One can recognise a KARI N-terminal Rossmann domain in the interval alanine 2 to threonine 181. NADP(+) contacts are provided by residues tyrosine 25–glutamine 28, arginine 48, serine 52, and aspartate 82–glutamine 85. Histidine 107 is a catalytic residue. Glycine 133 is a binding site for NADP(+). Residues threonine 182–valine 327 enclose the KARI C-terminal knotted domain. Positions 190, 194, 226, and 230 each coordinate Mg(2+). Position 251 (serine 251) interacts with substrate.

This sequence belongs to the ketol-acid reductoisomerase family. Mg(2+) serves as cofactor.

The enzyme catalyses (2R)-2,3-dihydroxy-3-methylbutanoate + NADP(+) = (2S)-2-acetolactate + NADPH + H(+). It catalyses the reaction (2R,3R)-2,3-dihydroxy-3-methylpentanoate + NADP(+) = (S)-2-ethyl-2-hydroxy-3-oxobutanoate + NADPH + H(+). The protein operates within amino-acid biosynthesis; L-isoleucine biosynthesis; L-isoleucine from 2-oxobutanoate: step 2/4. It functions in the pathway amino-acid biosynthesis; L-valine biosynthesis; L-valine from pyruvate: step 2/4. Its function is as follows. Involved in the biosynthesis of branched-chain amino acids (BCAA). Catalyzes an alkyl-migration followed by a ketol-acid reduction of (S)-2-acetolactate (S2AL) to yield (R)-2,3-dihydroxy-isovalerate. In the isomerase reaction, S2AL is rearranged via a Mg-dependent methyl migration to produce 3-hydroxy-3-methyl-2-ketobutyrate (HMKB). In the reductase reaction, this 2-ketoacid undergoes a metal-dependent reduction by NADPH to yield (R)-2,3-dihydroxy-isovalerate. The polypeptide is Ketol-acid reductoisomerase (NADP(+)) (Halalkalibacterium halodurans (strain ATCC BAA-125 / DSM 18197 / FERM 7344 / JCM 9153 / C-125) (Bacillus halodurans)).